The primary structure comprises 672 residues: Glycine--tRNA ligase beta subunit (672 aa).

This sequence belongs to the class-II aminoacyl-tRNA synthetase family. As to quaternary structure, tetramer of two alpha and two beta subunits.

It is found in the cytoplasm. The enzyme catalyses tRNA(Gly) + glycine + ATP = glycyl-tRNA(Gly) + AMP + diphosphate. The protein is Glycine--tRNA ligase beta subunit of Thermotoga petrophila (strain ATCC BAA-488 / DSM 13995 / JCM 10881 / RKU-1).